The sequence spans 94 residues: Aspartyl/glutamyl-tRNA(Asn/Gln) amidotransferase subunit C (94 aa).

Belongs to the GatC family. In terms of assembly, heterotrimer of A, B and C subunits.

It catalyses the reaction L-glutamyl-tRNA(Gln) + L-glutamine + ATP + H2O = L-glutaminyl-tRNA(Gln) + L-glutamate + ADP + phosphate + H(+). It carries out the reaction L-aspartyl-tRNA(Asn) + L-glutamine + ATP + H2O = L-asparaginyl-tRNA(Asn) + L-glutamate + ADP + phosphate + 2 H(+). Functionally, allows the formation of correctly charged Asn-tRNA(Asn) or Gln-tRNA(Gln) through the transamidation of misacylated Asp-tRNA(Asn) or Glu-tRNA(Gln) in organisms which lack either or both of asparaginyl-tRNA or glutaminyl-tRNA synthetases. The reaction takes place in the presence of glutamine and ATP through an activated phospho-Asp-tRNA(Asn) or phospho-Glu-tRNA(Gln). The chain is Aspartyl/glutamyl-tRNA(Asn/Gln) amidotransferase subunit C from Opitutus terrae (strain DSM 11246 / JCM 15787 / PB90-1).